The sequence spans 29 residues: Trypsin inhibitor 1 (29 aa).

Disulfide bonds link cysteine 3/cysteine 20, cysteine 10/cysteine 22, and cysteine 16/cysteine 28.

The protein belongs to the protease inhibitor I7 (squash-type serine protease inhibitor) family.

The protein resides in the secreted. Inhibits trypsin. This chain is Trypsin inhibitor 1, found in Cucurbita maxima (Pumpkin).